The sequence spans 530 residues: MQLKSTVHFLSLLAYTAAHGFVSDISVGDNWYVGSNPFQDAWKQPSPERVVWSFFDGGNGPVADLTTKNIVCNTNAQAAKLYIDSVEAGSQVTFYWTSWPSGHLGPIMTYLAKCNGDCRDNDPSSLSYFKIDEKGLENGQWATQELIANNNSWTVTLPSDISAGNYLIRHELLALQESSRRLGAQFYPMCTNLKITGGGSANPEGVTFPGAYKADDPGILVDIFNGISDYVIPGPPVYGSGSSSSQNSVESSAKKDEPAGVETPVSTTSSKKDSISTSAESVVSTFSSEPVYSSLVESSSALDAPKSTDAVKSVEAKETTKVEEVSSSALESTLNQLTQQATVTSTLYSSASPSSSPVLSSSKPASTSNPEKLSSAPVTITKTAVATEVYESRDNGEIVSVSIDSKHLPTSNAAAAAPTADNAPAHENGLYVFTVTQFATTTTYVTRAPRTTAVTVFNENVVTQVIVRTEWTQNTPVTVYARPTAAVKAATGNGASAAAEPNTGTGSGGTTPSYVKRYMEKAKDLVKRMF.

The N-terminal stretch at 1–18 (MQLKSTVHFLSLLAYTAA) is a signal peptide. Cu(2+) is bound by residues His19 and His103. 2 disulfide bridges follow: Cys72–Cys190 and Cys114–Cys118. Asn150 carries an N-linked (GlcNAc...) asparagine glycan. Gln185 is an O2 binding site. Residue Tyr187 coordinates Cu(2+). Over residues 238 to 251 (YGSGSSSSQNSVES) the composition is skewed to low complexity. 4 disordered regions span residues 238-279 (YGSG…STSA), 297-329 (ESSS…SSSA), 348-375 (YSSA…KLSS), and 492-512 (GNGA…GTTP). The span at 312 to 324 (KSVEAKETTKVEE) shows a compositional bias: basic and acidic residues. Positions 348–368 (YSSASPSSSPVLSSSKPASTS) are enriched in low complexity.

This sequence belongs to the polysaccharide monooxygenase AA9 family. Cu(2+) is required as a cofactor.

It is found in the secreted. It catalyses the reaction [(1-&gt;4)-beta-D-glucosyl]n+m + reduced acceptor + O2 = 4-dehydro-beta-D-glucosyl-[(1-&gt;4)-beta-D-glucosyl]n-1 + [(1-&gt;4)-beta-D-glucosyl]m + acceptor + H2O.. Functionally, lytic polysaccharide monooxygenase (LPMO) that depolymerizes polysaccharides via the oxidation of scissile alpha- or beta-(1-4)-glycosidic bonds, yielding C1 or C4 oxidation products. Catalysis by LPMOs requires the reduction of the active-site copper from Cu(II) to Cu(I) by a reducing agent and H(2)O(2) or O(2) as a cosubstrate. Amorphous cellulose is not a suitable substrate for LPMO9C, which may act at the surface of cellulose microfibrils without any release of soluble products. The protein is AA9 family lytic polysaccharide monooxygenase C of Geotrichum candidum (Oospora lactis).